A 58-amino-acid chain; its full sequence is Conotoxin Ar5.4 (58 aa).

Positions 1–20 (RIQSDLIRAALEDADMKNEK) are excised as a propeptide.

Belongs to the conotoxin T superfamily. Post-translationally, contains 2 disulfide bonds that can be either 'C1-C3, C2-C4' or 'C1-C4, C2-C3', since these disulfide connectivities have been observed for conotoxins with cysteine framework V (for examples, see AC P0DQQ7 and AC P81755). As to expression, expressed by the venom duct.

It localises to the secreted. The polypeptide is Conotoxin Ar5.4 (Conus arenatus (Sand-dusted cone)).